Reading from the N-terminus, the 1614-residue chain is Protein scribble homolog (1614 aa).

Residues 1–809 are sufficient for targeting to adherens junction and to inhibit cell proliferation; it reads MLKCIPLWRC…MRLWRERMVE (809 aa). LRR repeat units lie at residues 11–34, 35–58, 59–81, 83–105, 107–127, 128–150, 151–173, 174–196, 197–219, 221–242, 243–265, 267–288, 289–311, 312–334, 336–357, 359–380, and 382–405; these read NRHV…IYRY, SRSL…FFRL, LNLR…VANF, QLVE…KFCK, LEIA…FTQL, RSLA…VGNL, ANLV…LSFL, VKLE…LGAL, PNLR…LGNL, RLVC…LGGL, LLLT…IGQL, QLSI…IGDC, ENLS…LGKL, TKLT…IGGC, ALSV…LAHT, ELHV…LTHL, and LKAL…DDAQ. S37 is subject to Phosphoserine. Position 378 is a phosphothreonine (T378). Disordered regions lie at residues 417-441, 462-608, and 636-692; these read PQQP…SDAP, GAAA…RLIR, and AQPD…VVSA. Residues 428 to 437 are compositionally biased toward polar residues; that stretch reads GLQSSPSESW. Position 475 is a phosphothreonine (T475). Residues 479-494 show a composition bias toward basic and acidic residues; that stretch reads SELKVMKRGVEERRGE. Residues 516 to 533 are compositionally biased toward polar residues; the sequence is TESGLSEDSQPSTGTASQ. Residues 548 to 557 show a composition bias toward low complexity; that stretch reads QQEAAPNAQE. The segment covering 662–686 has biased composition (acidic residues); sequence EEEDEEDEEEDEEEEEVAVAEEDKE. Residues 664–691 adopt a coiled-coil conformation; that stretch reads EDEEDEEEDEEEEEVAVAEEDKEEAVVS. S699 and S755 each carry phosphoserine. Positions 708 to 1219 are interaction with ARHGEF7; the sequence is IEPARIEEEE…SLESVSSIDR (512 aa). In terms of domain architecture, PDZ 1 spans 719–806; the sequence is TLTIVRQTGG…TVQMRLWRER (88 aa). The segment at 719 to 1184 is required for interaction with VIM; it reads TLTIVRQTGG…TVLVCDGFDT (466 aa). T817 carries the post-translational modification Phosphothreonine. Residues S826, S866, and S930 each carry the phosphoserine modification. A PDZ 2 domain is found at 853-941; that stretch reads VACLVRSEKG…TIALLLEREA (89 aa). The interval 940-971 is disordered; it reads EAGGPLPPSPLPHSPPPPVTAPSTVVTASPGE. A compositionally biased stretch (pro residues) spans 944-959; the sequence is PLPPSPLPHSPPPPVT. Positions 960 to 969 are enriched in low complexity; sequence APSTVVTASP. 2 consecutive PDZ domains span residues 994-1083 and 1090-1178; these read EICL…RRDP and ELCI…TVLV. Residues S1130, S1210, S1213, S1216, S1222, S1260, S1268, and S1271 each carry the phosphoserine modification. The segment at 1214–1448 is disordered; sequence VSSIDRELSP…LPDRALSPAE (235 aa). The span at 1217–1232 shows a compositional bias: basic and acidic residues; sequence IDRELSPEGCGKEKEP. T1304 carries the phosphothreonine modification. S1310 bears the Phosphoserine mark. Positions 1315–1327 are enriched in basic and acidic residues; it reads SFRERQKYFELEV. The residue at position 1340 (S1340) is a Phosphoserine. Residues 1341 to 1368 adopt a coiled-coil conformation; that stretch reads LVGADDLRKMQEEEARKLQQKRAQLMRE. The span at 1345-1357 shows a compositional bias: basic and acidic residues; it reads DDLRKMQEEEARK. Acidic residues predominate over residues 1378-1390; it reads LDGEAPDDEEPEE. The span at 1396–1408 shows a compositional bias: low complexity; it reads GPAAGLSPSSPQP. Residues S1402 and S1405 each carry the phosphoserine modification. Residues 1418 to 1429 are compositionally biased toward basic and acidic residues; that stretch reads AKAERRHQERLR. Phosphoserine is present on residues S1432, S1445, and S1467. The segment at 1476-1524 is disordered; that stretch reads QMVLSKSQEGRSRRGPLERLAEAPSPAPTPSPTPVEDLGLQTSTSPGRL. The span at 1483-1496 shows a compositional bias: basic and acidic residues; sequence QEGRSRRGPLERLA. S1500 is subject to Phosphoserine. The residue at position 1504 (T1504) is a Phosphothreonine. A phosphoserine mark is found at S1506, S1520, and S1550. The interval 1581 to 1614 is disordered; that stretch reads GRPSPGTVGPEEVTLCSSRRPVRPGRRGLGPVPS.

Belongs to the LAP (LRR and PDZ) protein family. In terms of assembly, interacts with UBE3A. Interacts with PAK1 and PAK2. Interacts (via PDZ domains) with VANGL2. Interacts (via PDZ domains) with LPP and TRIP6; the interaction is direct. Interacts (via PDZ domains) with TJP2. Interacts (via PDZ domains) with APC; may mediate APC targeting to adherens junctions of epithelial cells. Interacts (via PDZ domains) with TSHR; regulates TSHR trafficking and function. Interacts with ARHGEF7 and GIT1; interacts directly with ARHGEF7. Interacts with CTNNB1. Interacts with MAPK12. Interacts (via PDZ domains 1 and 3) with MCC. Interacts with DLG5. Interacts with STK4/MST1 and LATS1 in the presence of DLG5. Interacts (via PDZ domain 3) with CRTAM (via PDZ-binding motif); the interaction promotes CRTAM and SCRIB polarization in a subset of CD4+ T-cells. Interacts with YES1, when YES1 is in a closed conformation; the interaction facilitates YES1 autophosphorylation. Interacts (via PDZ domains) with VIM; the interaction protects SCRIB from proteasomal degradation and facilitates SCRIB localization to intermediate filaments, the interaction is reduced by cell contact inhibition. Post-translationally, ubiquitinated; targeted for UBE3A-dependent multiubiquitination and degraded. Palmitoylated. Could be depalmitoylated by LYPLA1 and/or LYPLA2. Palmitoylation of SCRIB by ZDHHC7 is required for its localization to cell-cell junctions, function in the establishement of epithelial cell polarity and the regulation of downstream signaling pathways important for epithelial cell differentiation.

The protein localises to the cell membrane. Its subcellular location is the cell junction. It localises to the adherens junction. The protein resides in the cell projection. It is found in the lamellipodium. The protein localises to the cytoplasm. Its subcellular location is the postsynapse. It localises to the presynapse. In terms of biological role, scaffold protein involved in different aspects of polarized cell differentiation regulating epithelial and neuronal morphogenesis and T-cell polarization. Via its interaction with CRTAM, required for the late phase polarization of a subset of CD4+ T-cells, which in turn regulates TCR-mediated proliferation and IFNG and IL22 production. Plays a role in cell directional movement, cell orientation, cell sheet organization and Golgi complex polarization at the cell migration front. Promotes epithelial cell layer barrier function via maintaining cell-cell adhesion. Most probably functions in the establishment of apico-basal cell polarity. May function in cell proliferation regulating progression from G1 to S phase and as a positive regulator of apoptosis for instance during acinar morphogenesis of the mammary epithelium. May regulate cell invasion via MAPK-mediated cell migration and adhesion. May play a role in exocytosis and in the targeting of synaptic vesicles to synapses. Functions as an activator of Rac GTPase activity. The polypeptide is Protein scribble homolog (Canis lupus familiaris (Dog)).